A 524-amino-acid chain; its full sequence is Serine/threonine-protein kinase PAK 2 (524 aa).

Positions 1–81 are disordered; that stretch reads MSDNGELEDK…PEISPPSDFE (81 aa). N-acetylserine is present on Ser2. A phosphoserine mark is found at Ser2, Ser20, Ser55, and Ser58. Phosphothreonine is present on Thr60. Lys62 is subject to N6-acetyllysine. Ser64 is subject to Phosphoserine. The segment covering 67–81 has biased composition (basic and acidic residues); that stretch reads KEKERPEISPPSDFE. The GTPase-binding stretch occupies residues 69 to 112; that stretch reads KERPEISPPSDFEHTIHVGFDAVTGEFTGMPEQWARLLQTSNIT. Residues 69 to 137 form an autoregulatory region region; sequence KERPEISPPS…KFYDSNTVKQ (69 aa). Residues 74–87 enclose the CRIB domain; the sequence is ISPPSDFEHTIHVG. Residue Lys128 is modified to N6-acetyllysine. Thr134 is modified (phosphothreonine). Tyr139 is subject to Phosphotyrosine. A Phosphoserine modification is found at Ser141. Thr143 is modified (phosphothreonine). 2 disordered regions span residues 143–164 and 169–188; these read TPPE…GTEA and TEEE…PRPD. Ser152 is subject to Phosphoserine. A phosphothreonine mark is found at Thr154 and Thr169. Residues 169-178 are compositionally biased toward acidic residues; sequence TEEEDDDEET. A Phosphoserine modification is found at Ser197. Residue Gly213 is the site of N-myristoyl glycine; in form PAK-2p34 attachment. Residues 245–251 carry the Nuclear localization signal motif; it reads PKKKYTR. Positions 249–499 constitute a Protein kinase domain; sequence YTRYEKIGQG…SAKELLQHPF (251 aa). ATP contacts are provided by residues 255-263 and Lys278; that span reads IGQGASGTV. Catalysis depends on Arg367, which acts as the Proton acceptor. Thr402 carries the phosphothreonine; by autocatalysis modification.

The protein belongs to the protein kinase superfamily. STE Ser/Thr protein kinase family. STE20 subfamily. Interacts tightly with GTP-bound but not GDP-bound CDC42/p21 and RAC1. Interacts with SH3MD4. Interacts with SCRIB. Interacts with ARHGEF7 and GIT1. PAK-2p34 interacts with ARHGAP10. As to quaternary structure, (Microbial infection) Interacts with and activated by HIV-1 Nef. In terms of processing, full-length PAK2 is autophosphorylated when activated by CDC42/p21. Following cleavage, both peptides, PAK-2p27 and PAK-2p34, become highly autophosphorylated, with PAK-2p27 being phosphorylated on serine and PAK-2p34 on threonine residues, respectively. Autophosphorylation of PAK-2p27 can occur in the absence of any effectors and is dependent on phosphorylation of Thr-402, because PAK-2p27 is acting as an exogenous substrate. Post-translationally, during apoptosis proteolytically cleaved by caspase-3 or caspase-3-like proteases to yield active PAK-2p34. Ubiquitinated, leading to its proteasomal degradation. In terms of processing, PAK-2p34 is myristoylated. Ubiquitously expressed. Higher levels seen in skeletal muscle, ovary, thymus and spleen.

Its subcellular location is the cytoplasm. The protein resides in the nucleus. It localises to the perinuclear region. It is found in the membrane. It catalyses the reaction L-seryl-[protein] + ATP = O-phospho-L-seryl-[protein] + ADP + H(+). It carries out the reaction L-threonyl-[protein] + ATP = O-phospho-L-threonyl-[protein] + ADP + H(+). Activated by binding small G proteins. Binding of GTP-bound CDC42 or RAC1 to the autoregulatory region releases monomers from the autoinhibited dimer, enables phosphorylation of Thr-402 and allows the kinase domain to adopt an active structure. Following caspase cleavage, autophosphorylated PAK-2p34 is constitutively active. Serine/threonine protein kinase that plays a role in a variety of different signaling pathways including cytoskeleton regulation, cell motility, cell cycle progression, apoptosis or proliferation. Acts as a downstream effector of the small GTPases CDC42 and RAC1. Activation by the binding of active CDC42 and RAC1 results in a conformational change and a subsequent autophosphorylation on several serine and/or threonine residues. Full-length PAK2 stimulates cell survival and cell growth. Phosphorylates MAPK4 and MAPK6 and activates the downstream target MAPKAPK5, a regulator of F-actin polymerization and cell migration. Phosphorylates JUN and plays an important role in EGF-induced cell proliferation. Phosphorylates many other substrates including histone H4 to promote assembly of H3.3 and H4 into nucleosomes, BAD, ribosomal protein S6, or MBP. Phosphorylates CASP7, thereby preventing its activity. Additionally, associates with ARHGEF7 and GIT1 to perform kinase-independent functions such as spindle orientation control during mitosis. On the other hand, apoptotic stimuli such as DNA damage lead to caspase-mediated cleavage of PAK2, generating PAK-2p34, an active p34 fragment that translocates to the nucleus and promotes cellular apoptosis involving the JNK signaling pathway. Caspase-activated PAK2 phosphorylates MKNK1 and reduces cellular translation. In Homo sapiens (Human), this protein is Serine/threonine-protein kinase PAK 2 (PAK2).